We begin with the raw amino-acid sequence, 296 residues long: Glycine N-acyltransferase (296 aa).

K16, K127, and K141 each carry N6-acetyllysine; alternate. An N6-succinyllysine; alternate mark is found at K16, K127, and K141. K159 carries the post-translational modification N6-acetyllysine. At K169 the chain carries N6-succinyllysine. N6-acetyllysine; alternate occurs at positions 183 and 256. Residues K183 and K256 each carry the N6-succinyllysine; alternate modification.

This sequence belongs to the glycine N-acyltransferase family.

Its subcellular location is the mitochondrion. It carries out the reaction an acyl-CoA + glycine = an N-acylglycine + CoA + H(+). The catalysed reaction is benzoyl-CoA + glycine = N-benzoylglycine + CoA + H(+). Its function is as follows. Mitochondrial acyltransferase which transfers an acyl group to the N-terminus of glycine and glutamine, although much less efficiently. Can conjugate a multitude of substrates to form a variety of N-acylglycines, thereby detoxify xenobiotics, such as benzoic acid or salicylic acid, and endogenous organic acids, such as isovaleric acid. In Pongo abelii (Sumatran orangutan), this protein is Glycine N-acyltransferase (GLYAT).